The chain runs to 166 residues: Protein SprT (166 aa).

The 146-residue stretch at 19–164 (RDALARANLK…CVRCGDTLVA (146 aa)) folds into the SprT-like domain. H78 serves as a coordination point for Zn(2+). E79 is a catalytic residue. Residue H82 coordinates Zn(2+).

The protein belongs to the SprT family. It depends on Zn(2+) as a cofactor.

The protein resides in the cytoplasm. The polypeptide is Protein SprT (Cronobacter sakazakii (strain ATCC BAA-894) (Enterobacter sakazakii)).